The sequence spans 97 residues: Co-chaperonin GroES (97 aa).

It belongs to the GroES chaperonin family. As to quaternary structure, heptamer of 7 subunits arranged in a ring. Interacts with the chaperonin GroEL.

It localises to the cytoplasm. Functionally, together with the chaperonin GroEL, plays an essential role in assisting protein folding. The GroEL-GroES system forms a nano-cage that allows encapsulation of the non-native substrate proteins and provides a physical environment optimized to promote and accelerate protein folding. GroES binds to the apical surface of the GroEL ring, thereby capping the opening of the GroEL channel. The polypeptide is Co-chaperonin GroES (Buchnera aphidicola subsp. Tuberolachnus salignus).